The sequence spans 301 residues: MATPTESEFAAPIPQTNPGSYEELHRKARDVFPTCFEGAKLMVNKGLSSHFQVSHTLSLSAMNTGYRFGATYVGTNQVGPAEAYPILLGDTDVNGNTTATILHQMGIYRTKLQGQIQQGKLAGAQATIERKGRLSTLGLTLANIDLVNEAGILVGQFLRRLTPRLDVGTEMVYQYGKNIPGGQISVLSYAARYTANHFIAAATLGASGVHLTYYHKQHDNLAFGVEFECNANVGEAVTTLAYQTELPEEGVTMRASFDTNWSVGGVFEKRLSQQLPFTLALSGTLNHVKAAGKFGIGLIIG.

Residues 1-20 (MATPTESEFAAPIPQTNPGS) are disordered.

This sequence belongs to the Tom40 family. As to quaternary structure, forms part of the preprotein translocase complex of the outer mitochondrial membrane (TOM complex). Interacts with mitochondrial targeting sequences.

It localises to the mitochondrion outer membrane. Its function is as follows. Channel-forming protein essential for import of protein precursors into mitochondria. Specifically required for nnt-1 accumulation in the mitochondria and may be involved in the secretion of daf-28/insulin from the mitochondria. Required for embryonic and larval development. The polypeptide is Mitochondrial import receptor subunit TOM40 homolog (Caenorhabditis briggsae).